The chain runs to 179 residues: MSRIGRKPIEVPAGVTVNVDSNNLVTVKGPKGTLSESIRPEVTVNINGATVEITRVNDSRQARAFHGLSRTLVANMVDGVTKGFEKTLEMNGTGYRATLDGKTLVLSLGFSHPVRVEPYEGNSFEVAERRVVIKGPNKQKVGDQAANIRKLRPPEPYLGKGIKYSDEVIRRKAGKAGKK.

Belongs to the universal ribosomal protein uL6 family. As to quaternary structure, part of the 50S ribosomal subunit.

Its function is as follows. This protein binds to the 23S rRNA, and is important in its secondary structure. It is located near the subunit interface in the base of the L7/L12 stalk, and near the tRNA binding site of the peptidyltransferase center. The chain is Large ribosomal subunit protein uL6 from Herpetosiphon aurantiacus (strain ATCC 23779 / DSM 785 / 114-95).